The following is a 298-amino-acid chain: Palmitoyl-protein thioesterase 1 (298 aa).

The N-terminal stretch at 1–16 (MRYFPLLLCLLAITTA) is a signal peptide. Asparagine 20 is a glycosylation site (N-linked (GlcNAc...) asparagine). Cystine bridges form between cysteine 37–cysteine 38, cysteine 88–cysteine 120, and cysteine 144–cysteine 151. Serine 107 acts as the Nucleophile in catalysis. Aspartate 224 is a catalytic residue. A glycan (N-linked (GlcNAc...) asparagine) is linked at asparagine 250. The active site involves histidine 280.

Belongs to the palmitoyl-protein thioesterase family.

The enzyme catalyses S-hexadecanoyl-L-cysteinyl-[protein] + H2O = L-cysteinyl-[protein] + hexadecanoate + H(+). Functionally, removes thioester-linked fatty acyl groups such as palmitate (hexadecanoate) from modified cysteine residues in proteins or peptides. This Caenorhabditis elegans protein is Palmitoyl-protein thioesterase 1 (ppt-1).